A 248-amino-acid chain; its full sequence is Probable transcriptional regulatory protein Bind_0345 (248 aa).

This sequence belongs to the TACO1 family.

The protein localises to the cytoplasm. The polypeptide is Probable transcriptional regulatory protein Bind_0345 (Beijerinckia indica subsp. indica (strain ATCC 9039 / DSM 1715 / NCIMB 8712)).